The following is a 335-amino-acid chain: Ubiquinone biosynthesis protein COQ4, mitochondrial (335 aa).

Residues 1-10 constitute a mitochondrion transit peptide; that stretch reads MLRLSLLRST. Zn(2+) is bound by residues His210, Asp211, His214, and Glu226.

It belongs to the COQ4 family. As to quaternary structure, component of a multi-subunit COQ enzyme complex, composed of at least COQ3, COQ4, COQ5, COQ6, COQ7 and COQ9. Interacts with COQ3. Zn(2+) serves as cofactor.

It localises to the mitochondrion inner membrane. The enzyme catalyses 4-hydroxy-3-methoxy-5-(all-trans-hexaprenyl)benzoate + H(+) = 2-methoxy-6-(all-trans-hexaprenyl)phenol + CO2. Its pathway is cofactor biosynthesis; ubiquinone biosynthesis. Lyase that catalyzes the C1-decarboxylation of 4-hydroxy-3-methoxy-5-(all-trans-hexaprenyl)benzoic acid into 2-methoxy-6-(all-trans-hexaprenyl)phenol during ubiquinone biosynthesis. May play a role in organizing a multi-subunit COQ enzyme complex required for coenzyme Q biosynthesis. Required for steady-state levels of COQ3, COQ4, COQ6, COQ7 and COQ9 polypeptides. This is Ubiquinone biosynthesis protein COQ4, mitochondrial from Saccharomyces cerevisiae (strain ATCC 204508 / S288c) (Baker's yeast).